The chain runs to 580 residues: DBIRD complex subunit ZNF326 (580 aa).

Positions 1–124 (MDFEDDYVHS…YRNSLDSFGG (124 aa)) are mediates transcriptional activation. Residues serine 48, serine 56, serine 63, serine 69, serine 81, serine 82, serine 91, serine 106, serine 114, serine 118, serine 121, and serine 137 each carry the phosphoserine modification. Lysine 140 is covalently cross-linked (Glycyl lysine isopeptide (Lys-Gly) (interchain with G-Cter in SUMO2)). A disordered region spans residues 156–196 (SYSSFSSPHMKPAPVGSRGRGTPAYPESTFGSRSYDAFGGP). Arginine 173 bears the Omega-N-methylarginine mark. Serine 212 bears the Phosphoserine mark. Arginine 235 carries the post-translational modification Omega-N-methylarginine. Residues 238 to 260 (KRKMMQIFIKPGGAFIKKPKLAK) carry the Bipartite nuclear localization signal motif. Lysine 240 is covalently cross-linked (Glycyl lysine isopeptide (Lys-Gly) (interchain with G-Cter in SUMO2)). N6-acetyllysine; alternate is present on lysine 247. Lysine 247 participates in a covalent cross-link: Glycyl lysine isopeptide (Lys-Gly) (interchain with G-Cter in SUMO2); alternate. Glycyl lysine isopeptide (Lys-Gly) (interchain with G-Cter in SUMO2) cross-links involve residues lysine 254 and lysine 264. Residues 256–302 (PKLAKPMDKMNLSKSPTKTDPKNEEEEKRRIEARREKQRRRREKNSE) are disordered. Phosphoserine is present on serine 270. Positions 272–290 (TKTDPKNEEEEKRRIEARR) are enriched in basic and acidic residues. The C2H2 AKAP95-type 1 zinc-finger motif lies at 314–336 (CSFCKFRTFEEKDIELHLESSSH). Lysine 401 is covalently cross-linked (Glycyl lysine isopeptide (Lys-Gly) (interchain with G-Cter in SUMO2)). The C2H2 AKAP95-type 2 zinc finger occupies 407–430 (CSACSVYIPALHSSVQLHLKSPDH). Glycyl lysine isopeptide (Lys-Gly) (interchain with G-Cter in SUMO2) cross-links involve residues lysine 459 and lysine 467. The tract at residues 470–580 (NPFEIQDHPQ…ATEQCEHRQM (111 aa)) is disordered. The segment covering 483–529 (IEGDEEDEEKIDEPIEEEEEEEEEEEEEGEEAGSVEEEGDVEGEEGT) has biased composition (acidic residues). Low complexity predominate over residues 530-539 (AEAAAAGEAD). A compositionally biased stretch (acidic residues) spans 540-562 (AVGEAEGAGEAEEAEEEEEEEGT).

Belongs to the AKAP95 family. As to quaternary structure, component of the DBIRD complex. Interacts with CCAR2; the interaction is direct. Ubiquitously expressed in adult tissues. Highly expressed in neuronal tissues such as brain and neural tube.

The protein resides in the nucleus matrix. Core component of the DBIRD complex, a multiprotein complex that acts at the interface between core mRNP particles and RNA polymerase II (RNAPII) and integrates transcript elongation with the regulation of alternative splicing: the DBIRD complex affects local transcript elongation rates and alternative splicing of a large set of exons embedded in (A + T)-rich DNA regions. May also play a role in neuronal differentiation. Able to bind DNA and activate expression in vitro. The protein is DBIRD complex subunit ZNF326 (Znf326) of Mus musculus (Mouse).